The chain runs to 507 residues: Histidine ammonia-lyase (507 aa).

Positions 140-142 (ASG) form a cross-link, 5-imidazolinone (Ala-Gly). 2,3-didehydroalanine (Ser) is present on S141.

Belongs to the PAL/histidase family. Post-translationally, contains an active site 4-methylidene-imidazol-5-one (MIO), which is formed autocatalytically by cyclization and dehydration of residues Ala-Ser-Gly.

It localises to the cytoplasm. It catalyses the reaction L-histidine = trans-urocanate + NH4(+). The protein operates within amino-acid degradation; L-histidine degradation into L-glutamate; N-formimidoyl-L-glutamate from L-histidine: step 1/3. This Yersinia enterocolitica serotype O:8 / biotype 1B (strain NCTC 13174 / 8081) protein is Histidine ammonia-lyase.